A 258-amino-acid polypeptide reads, in one-letter code: UPF0246 protein YaaA (258 aa).

The protein belongs to the UPF0246 family.

The sequence is that of UPF0246 protein YaaA from Escherichia coli (strain SMS-3-5 / SECEC).